Consider the following 316-residue polypeptide: Conjugated bile acid hydrolase (316 aa).

The active-site Nucleophile is C2. 2 residues coordinate deoxycholate: C2 and R18. A taurine-binding site is contributed by N81.

It belongs to the peptidase C59 family.

The catalysed reaction is cholate + taurine = taurocholate + H2O. The enzyme catalyses taurochenodeoxycholate + H2O = chenodeoxycholate + taurine. It catalyses the reaction taurodeoxycholate + H2O = deoxycholate + taurine. It carries out the reaction glycocholate + H2O = cholate + glycine. The catalysed reaction is glycodeoxycholate + H2O = deoxycholate + glycine. It participates in lipid metabolism; bile acid biosynthesis. In terms of biological role, bile salt hydrolase that catalyzes the deconjugation of glycine- and taurine-linked bile salts, which occurs naturally in the intestines of humans, releasing amino acid residues and deconjugated bile salts (bile acids). Can hydrolyze the amide bond in the bile salts taurocholate (TCA), taurodeoxycholate (TDCA), taurochenodeoxycholate (TCDCA), glycocholate (GCA) and glycodeoxycholate (GDCA). Shows highest activity toward the taurine-conjugated bile salts TCA and TCDCA. The activity toward the other three substrates (TDCA, GCA and GDCA) is relatively low. This enzyme likely contributes to bile salt resistance of the strain and may be associated with survival capability of strain JCM1131 within the human intestine by bile detoxification. The sequence is that of Conjugated bile acid hydrolase from Lactobacillus gasseri (strain ATCC 33323 / DSM 20243 / BCRC 14619 / CIP 102991 / JCM 1131 / KCTC 3163 / NCIMB 11718 / NCTC 13722 / AM63).